Here is a 324-residue protein sequence, read N- to C-terminus: MSLYMLVSTFAVAFIITVIGVPLFIPFLVKLKFGQSIRDEGPKMHEKKSGTPTMGAVVFITAMLISFLVFSFISGEVSAATWLLFIALALFGALGFLDDYIKVVQKRNLGLTSKQKFLGQVVISILFYLVYHFNDFAETLNIPFTNIEVDLGWFFVIFILFWLVGFSNAVNLTDGLDGLVSGLSVIAFSAFGVIAFYQEQMDVAIFCFAIVGGMLGFLLFNKNPAKIFMGDTGSLALGGSIAAISILVHQEWLLLLIGIIFVIETASVILQVFYFKATGGKRIFRMTPIHHHFELGGWSEWRVVLTFWGIGLVGAIISVCVVIF.

10 helical membrane-spanning segments follow: residues 9–29 (TFAV…PFLV), 53–73 (TMGA…FSFI), 77–97 (VSAA…LGFL), 117–137 (FLGQ…NDFA), 147–167 (IEVD…VGFS), 176–196 (LDGL…VIAF), 201–221 (MDVA…LLFN), 227–247 (IFMG…ISIL), 253–273 (LLLL…LQVF), and 304–324 (VLTF…VVIF).

The protein belongs to the glycosyltransferase 4 family. MraY subfamily. Mg(2+) serves as cofactor.

The protein localises to the cell membrane. The catalysed reaction is UDP-N-acetyl-alpha-D-muramoyl-L-alanyl-gamma-D-glutamyl-meso-2,6-diaminopimeloyl-D-alanyl-D-alanine + di-trans,octa-cis-undecaprenyl phosphate = di-trans,octa-cis-undecaprenyl diphospho-N-acetyl-alpha-D-muramoyl-L-alanyl-D-glutamyl-meso-2,6-diaminopimeloyl-D-alanyl-D-alanine + UMP. Its pathway is cell wall biogenesis; peptidoglycan biosynthesis. In terms of biological role, catalyzes the initial step of the lipid cycle reactions in the biosynthesis of the cell wall peptidoglycan: transfers peptidoglycan precursor phospho-MurNAc-pentapeptide from UDP-MurNAc-pentapeptide onto the lipid carrier undecaprenyl phosphate, yielding undecaprenyl-pyrophosphoryl-MurNAc-pentapeptide, known as lipid I. The sequence is that of Phospho-N-acetylmuramoyl-pentapeptide-transferase from Listeria monocytogenes serovar 1/2a (strain ATCC BAA-679 / EGD-e).